Reading from the N-terminus, the 310-residue chain is Carbamate kinase (310 aa).

This sequence belongs to the carbamate kinase family.

Its subcellular location is the cytoplasm. The catalysed reaction is hydrogencarbonate + NH4(+) + ATP = carbamoyl phosphate + ADP + H2O + H(+). Its pathway is metabolic intermediate metabolism; carbamoyl phosphate degradation; CO(2) and NH(3) from carbamoyl phosphate: step 1/1. This chain is Carbamate kinase (arcC), found in Staphylococcus epidermidis (strain ATCC 35984 / DSM 28319 / BCRC 17069 / CCUG 31568 / BM 3577 / RP62A).